Reading from the N-terminus, the 426-residue chain is Histidine--tRNA ligase (426 aa).

The protein belongs to the class-II aminoacyl-tRNA synthetase family. As to quaternary structure, homodimer.

It is found in the cytoplasm. The enzyme catalyses tRNA(His) + L-histidine + ATP = L-histidyl-tRNA(His) + AMP + diphosphate + H(+). The protein is Histidine--tRNA ligase of Streptococcus thermophilus (strain CNRZ 1066).